Reading from the N-terminus, the 78-residue chain is Major outer membrane lipoprotein Lpp (78 aa).

Positions 1–20 are cleaved as a signal peptide; that stretch reads MNRTKLVLGAVILASTMLAG. Residue Cys-21 is the site of N-palmitoyl cysteine attachment. The S-diacylglycerol cysteine moiety is linked to residue Cys-21. 2 consecutive repeats follow at residues 24–34 and 38–48; these read NAKIDQLSSDV and NAKVDQLSNDV. Residues 27-75 are a coiled coil; that stretch reads IDQLSSDVQTLNAKVDQLSNDVNAVRADVQAAKDDAARANQRLDNQAQA. Lys-78 bears the N6-murein peptidoglycan lysine mark.

This sequence belongs to the Lpp family. In terms of assembly, homotrimer.

The protein resides in the cell outer membrane. It localises to the secreted. Its subcellular location is the cell wall. A highly abundant outer membrane lipoprotein that controls the distance between the inner and outer membranes. The only protein known to be covalently linked to the peptidoglycan network (PGN). Also non-covalently binds the PGN. The link between the cell outer membrane and PGN contributes to maintenance of the structural and functional integrity of the cell envelope, and maintains the correct distance between the PGN and the outer membrane. The sequence is that of Major outer membrane lipoprotein Lpp from Yersinia pestis.